Consider the following 269-residue polypeptide: Tryptophan synthase alpha chain (269 aa).

Residues Glu-49 and Asp-60 each act as proton acceptor in the active site.

It belongs to the TrpA family. In terms of assembly, tetramer of two alpha and two beta chains.

It carries out the reaction (1S,2R)-1-C-(indol-3-yl)glycerol 3-phosphate + L-serine = D-glyceraldehyde 3-phosphate + L-tryptophan + H2O. It functions in the pathway amino-acid biosynthesis; L-tryptophan biosynthesis; L-tryptophan from chorismate: step 5/5. In terms of biological role, the alpha subunit is responsible for the aldol cleavage of indoleglycerol phosphate to indole and glyceraldehyde 3-phosphate. This is Tryptophan synthase alpha chain from Stutzerimonas stutzeri (strain A1501) (Pseudomonas stutzeri).